A 168-amino-acid chain; its full sequence is Diphosphoinositol polyphosphate phosphohydrolase 1 (168 aa).

N-acetylmethionine is present on methionine 1. Substrate-binding positions include arginine 10, lysine 18–arginine 20, and serine 39–arginine 41. In terms of domain architecture, Nudix hydrolase spans tyrosine 17–arginine 144. The Mg(2+) site is built by glycine 50 and glutamate 66. Residues glycine 51–glycine 72 carry the Nudix box motif. Glutamate 69 functions as the Proton acceptor in the catalytic mechanism. Residue glutamate 70 participates in Mg(2+) binding. Substrate contacts are provided by residues arginine 89–histidine 91, arginine 115, and lysine 133.

This sequence belongs to the Nudix hydrolase family. DIPP subfamily. In terms of assembly, monomer. Mg(2+) is required as a cofactor. Requires Mn(2+) as cofactor. It depends on Zn(2+) as a cofactor. In terms of tissue distribution, present in heart, lung, liver and spleen (at protein level). Widely expressed.

The protein resides in the cytoplasm. It is found in the nucleus. It catalyses the reaction diphospho-myo-inositol polyphosphate + H2O = myo-inositol polyphosphate + phosphate.. The catalysed reaction is 5-diphospho-1D-myo-inositol 1,2,3,4,6-pentakisphosphate + H2O = 1D-myo-inositol hexakisphosphate + phosphate + H(+). The enzyme catalyses 3,5-bis(diphospho)-1D-myo-inositol 1,2,4,6-tetrakisphosphate + H2O = 3-diphospho-1D-myo-inositol 1,2,4,5,6-pentakisphosphate + phosphate + 2 H(+). It carries out the reaction [phosphate](n+1) + n H2O = (n+1) phosphate + n H(+). It catalyses the reaction P(1),P(5)-bis(5'-adenosyl) pentaphosphate + H2O = ADP + ATP + 2 H(+). The catalysed reaction is P(1),P(6)-bis(5'-adenosyl) hexaphosphate + H2O = 2 ATP + 2 H(+). The enzyme catalyses P(1),P(4)-bis(5'-adenosyl) tetraphosphate + H2O = AMP + ATP + 2 H(+). It carries out the reaction a 5'-end (N(7)-methyl 5'-triphosphoguanosine)-ribonucleoside in mRNA + H2O = N(7)-methyl-GMP + a 5'-end diphospho-ribonucleoside in mRNA + 2 H(+). It catalyses the reaction a 5'-end (N(7)-methyl 5'-triphosphoguanosine)-ribonucleoside in mRNA + H2O = N(7)-methyl-GDP + a 5'-end phospho-ribonucleoside in mRNA + 2 H(+). In terms of biological role, cleaves a beta-phosphate from the diphosphate groups in PP-InsP5 (diphosphoinositol pentakisphosphate) and [PP]2-InsP4 (bisdiphosphoinositol tetrakisphosphate), suggesting that it may play a role in signal transduction. InsP6 (inositol hexakisphosphate) is not a substrate. Also able to catalyze the hydrolysis of dinucleoside oligophosphates, with diadenosine 5',5'''-P1,P6-hexaphosphate (Ap6A) and diadenosine 5',5'''- P1,P5-pentaphosphate (Ap5A) being the preferred substrates. The major reaction products are ADP and p4a from Ap6A and ADP and ATP from Ap5A. Also able to hydrolyze 5- phosphoribose 1-diphosphate. Acts as a negative regulator of the ERK1/2 pathway. Acts as a decapping enzyme that can hydrolyze both monomethylated and unmethylated capped RNAs. Hydrolyzes monomethylated capped RNA after both the alpha- and beta-phosphates generating m7GMP + ppRNA and m7GDP + pRNA. Modulates the stability of a subset of mRNAs implicated in cell motility. Divalent cations zinc, magnesium and manganese determine its substrate specificity. Exhibits diphosphoinositol polyphosphate phosphohydrolase in the presence of magnesium ions, diadenosine hexaphosphate hydrolase activity in the presence of manganese ions and endopolyphosphatase activity in the presence of zinc ions. Plays an important role in limiting DNA damage and maintaining cell survival upon oxidative stress via its endopolyphosphatase activity. The chain is Diphosphoinositol polyphosphate phosphohydrolase 1 from Mus musculus (Mouse).